A 708-amino-acid chain; its full sequence is RUN and FYVE domain-containing protein 1 (708 aa).

A compositionally biased stretch (basic and acidic residues) spans 1–17; the sequence is MADREGGCAAGRGRELE. The tract at residues 1–57 is disordered; the sequence is MADREGGCAAGRGRELEPELEPGPGPGSALEPGEEFEIVDRSQLPGPGDLRSATRPR. Residues 139–271 enclose the RUN domain; that stretch reads DADHAPLQQF…LDANLCLKGE (133 aa). Residues 321-374 adopt a coiled-coil conformation; it reads TVGDLQTKIDGLEKTNSKLQEELSAATDRICSLQEEQQQLREQNELIRERSEKS. Phosphotyrosine occurs at positions 389 and 400. Positions 405-617 form a coiled coil; the sequence is KQLKEEKKVR…QALQEMGLHL (213 aa). The interval 493–522 is disordered; the sequence is QVMSSMKQMEERLQHSERARQGAEERSHKL. Residues 500-522 are compositionally biased toward basic and acidic residues; sequence QMEERLQHSERARQGAEERSHKL. The segment at 615–625 is interaction with RAB4; it reads LHLSQSKLKME. At Ser-620 the chain carries Phosphoserine. The FYVE-type zinc-finger motif lies at 642–700; it reads DDEATHCRQCEKEFSISRRKHHCRNCGHIFCNTCSSNELALPSYPKPVRVCDSCHTLLL. Zn(2+) is bound by residues Cys-648, Cys-651, Cys-664, Cys-667, Cys-672, Cys-675, Cys-692, and Cys-695.

As to quaternary structure, self-assembles through coiled coil domains to drive ELVA (endo-lysosomal vesicular assembly) formation. Interacts with BMX. May interact with SSB. Interacts with RAB4 and RAB5 that have been activated by GTP-binding. Interacts WITH RAB14 and RAB4B (GTP-bound form); the interactions allow endosomal tethering and fusion. Interacts with ARL8B (GTP-bound form); the interaction is required for RUFY1 endosomal location and promotes interaction with RAB14. Phosphorylation on Tyr-389 and/or Tyr-400 is required for interaction with BMX and endosomal targeting. As to expression, broadly expressed, with highest levels in lung, testis, kidney and brain.

It is found in the early endosome membrane. In terms of biological role, activating adapter involved in cargo sorting from early/recycling endosomes. Regulates retrieval of proteins from endosomes to the trans-Golgi network through interaction with the dynein-dynactin complex. Dual effector of RAB4B and RAB14, mediates a cooperative interaction allowing endosomal tethering and fusion. Binds phospholipid vesicles containing phosphatidylinositol 3-phosphate and participates in early endosomal trafficking. In oocytes, self-assembles to form a protein matrix which hold together endolysosomes, autophagosomes and proteasomes and generate non-membrane-bound compartments called endo-lysosomal vesicular assemblies (ELVAs). In immature oocytes, ELVAs sequester ubiquitinated protein aggregates and degrade them upon oocyte maturation. This is RUN and FYVE domain-containing protein 1 from Homo sapiens (Human).